A 95-amino-acid chain; its full sequence is Aspartyl/glutamyl-tRNA(Asn/Gln) amidotransferase subunit C (95 aa).

The protein belongs to the GatC family. As to quaternary structure, heterotrimer of A, B and C subunits.

The enzyme catalyses L-glutamyl-tRNA(Gln) + L-glutamine + ATP + H2O = L-glutaminyl-tRNA(Gln) + L-glutamate + ADP + phosphate + H(+). It catalyses the reaction L-aspartyl-tRNA(Asn) + L-glutamine + ATP + H2O = L-asparaginyl-tRNA(Asn) + L-glutamate + ADP + phosphate + 2 H(+). Its function is as follows. Allows the formation of correctly charged Asn-tRNA(Asn) or Gln-tRNA(Gln) through the transamidation of misacylated Asp-tRNA(Asn) or Glu-tRNA(Gln) in organisms which lack either or both of asparaginyl-tRNA or glutaminyl-tRNA synthetases. The reaction takes place in the presence of glutamine and ATP through an activated phospho-Asp-tRNA(Asn) or phospho-Glu-tRNA(Gln). This Azorhizobium caulinodans (strain ATCC 43989 / DSM 5975 / JCM 20966 / LMG 6465 / NBRC 14845 / NCIMB 13405 / ORS 571) protein is Aspartyl/glutamyl-tRNA(Asn/Gln) amidotransferase subunit C.